The primary structure comprises 184 residues: ATP synthase subunit b, chloroplastic (184 aa).

Residues 27–49 traverse the membrane as a helical segment; the sequence is LATNPINLSVVLGVLIFFGKGVL.

It belongs to the ATPase B chain family. In terms of assembly, F-type ATPases have 2 components, F(1) - the catalytic core - and F(0) - the membrane proton channel. F(1) has five subunits: alpha(3), beta(3), gamma(1), delta(1), epsilon(1). F(0) has four main subunits: a(1), b(1), b'(1) and c(10-14). The alpha and beta chains form an alternating ring which encloses part of the gamma chain. F(1) is attached to F(0) by a central stalk formed by the gamma and epsilon chains, while a peripheral stalk is formed by the delta, b and b' chains.

It localises to the plastid. It is found in the chloroplast thylakoid membrane. Its function is as follows. F(1)F(0) ATP synthase produces ATP from ADP in the presence of a proton or sodium gradient. F-type ATPases consist of two structural domains, F(1) containing the extramembraneous catalytic core and F(0) containing the membrane proton channel, linked together by a central stalk and a peripheral stalk. During catalysis, ATP synthesis in the catalytic domain of F(1) is coupled via a rotary mechanism of the central stalk subunits to proton translocation. Functionally, component of the F(0) channel, it forms part of the peripheral stalk, linking F(1) to F(0). In Carica papaya (Papaya), this protein is ATP synthase subunit b, chloroplastic.